The chain runs to 267 residues: Sulfate transporter CysZ (267 aa).

4 helical membrane passes run F29–I49, I73–L93, I149–V169, and G212–V232.

It belongs to the CysZ family.

The protein resides in the cell inner membrane. In terms of biological role, high affinity, high specificity proton-dependent sulfate transporter, which mediates sulfate uptake. Provides the sulfur source for the cysteine synthesis pathway. This chain is Sulfate transporter CysZ, found in Pasteurella multocida (strain Pm70).